Reading from the N-terminus, the 448-residue chain is Antizyme inhibitor 1 (448 aa).

It belongs to the Orn/Lys/Arg decarboxylase class-II family. ODC antizyme inhibitor subfamily. As to quaternary structure, monomer. Interacts with OAZ1 and OAZ3; this interaction disrupts the interaction between the antizyme and ODC1. Ubiquitinated, leading to its proteasomal degradation; a process that is reduced in presence of antizyme OAZ1. Expressed during testis development.

The protein localises to the nucleus. In terms of biological role, antizyme inhibitor (AZI) protein that positively regulates ornithine decarboxylase (ODC) activity and polyamine uptake. AZI is an enzymatically inactive ODC homolog that counteracts the negative effect of ODC antizymes (AZs) OAZ1, OAZ2 and OAZ3 on ODC activity by competing with ODC for antizyme-binding. Inhibits antizyme-dependent ODC degradation and releases ODC monomers from their inactive complex with antizymes, leading to formation of the catalytically active ODC homodimer and restoring polyamine production. The polypeptide is Antizyme inhibitor 1 (Azin1) (Mus musculus (Mouse)).